Reading from the N-terminus, the 168-residue chain is uncharacterized protein (168 aa).

5 helical membrane-spanning segments follow: residues 15–33, 41–57, 73–93, 108–128, and 129–149; these read YLTVIIYRTGFVIAALAVL, LSLTFILIAATCCASSL, WIGLLFYINHYPALALGGALL, VPLLNLQPIFVACLWFSWVLN, and NLIALRIFSIISGVLLLVLAI.

It is found in the cell membrane. This is an uncharacterized protein from Haemophilus influenzae (strain ATCC 51907 / DSM 11121 / KW20 / Rd).